Here is a 301-residue protein sequence, read N- to C-terminus: Polynucleotide kinase (301 aa).

As to quaternary structure, homotetramer. Mg(2+) is required as a cofactor.

The catalysed reaction is a 5'-end dephospho-2'-deoxyribonucleoside-DNA + ATP = a 5'-end 5'-phospho-2'-deoxyribonucleoside-DNA + ADP + H(+). It catalyses the reaction a 2'-deoxyribonucleoside 3'-phosphate + H2O = a 2'-deoxyribonucleoside + phosphate. In terms of biological role, acts as a 5'-hydroxyl kinase, a 3'-phosphatase and a 2',3'-cyclic phosphodiesterase. Catalyzes the transfer of the terminal phosphate of ATP to the 5'-hydroxyl termini of ribo- and deoxyribonucleotides. In the presence of ADP the enzyme also catalyzes an exchange reaction. In the exchange reaction, an excess ADP causes the enzyme to transfer the 5' terminal phosphate from phosphorylated DNA to ADP. Involved in countering a host defense mechanism which activates T4-induced anticodon nuclease and shuts off viral translation. The polynucleotide kinase modifies the ends of nicked tRNA generated by the antiviral response of the host bacteria and facilitates repair by T4 RNA ligase. The chain is Polynucleotide kinase (pseT) from Escherichia coli (Bacteriophage T4).